Reading from the N-terminus, the 970-residue chain is GEM-interacting protein (970 aa).

Position 19 is a phosphoserine (serine 19). Disordered stretches follow at residues 44 to 76, 224 to 263, and 377 to 478; these read PLLS…EGPV, SEDL…AQAK, and PLDI…ENGL. The segment covering 56-65 has biased composition (polar residues); sequence PTATVTNEAS. Phosphoserine is present on residues serine 71, serine 231, serine 234, serine 243, serine 437, and serine 441. An F-BAR domain is found at 81–344; sequence EELDLRLIRT…CCAPFEPGQR (264 aa). Residues 231-246 show a composition bias toward polar residues; the sequence is SQGSPEDSAPQASPGP. Positions 459–472 are enriched in acidic residues; it reads SSDDFEERDPDLGD. Residues 493 to 537 form a Phorbol-ester/DAG-type zinc finger; sequence THQLRRLRGPAKCRECEAFMVSGTECEECFLTCHKRCLETLLILC. The Rho-GAP domain occupies 554–757; the sequence is LQLPRDFPEE…FLIVHYEQIF (204 aa). Threonine 660 carries the post-translational modification Phosphothreonine. The tract at residues 762-878 is disordered; that stretch reads LPQATEPPPQ…PVKYPRGGVR (117 aa). Over residues 766–778 the composition is skewed to pro residues; the sequence is TEPPPQDSSPAPG. The span at 815-830 shows a compositional bias: polar residues; the sequence is EQHPTATPTEIPTPQS. Residues 831 to 844 are compositionally biased toward basic and acidic residues; that stretch reads DQREDVAEDTKDGG. Residues 847-863 are compositionally biased toward polar residues; that stretch reads VSSQGPEDSLLGTQSRG. Serine 885, serine 907, serine 914, serine 919, and serine 923 each carry phosphoserine. The tract at residues 897–932 is disordered; the sequence is ETPITSVPRGSLRGRGPSPAAASPEGSPLRRTPLPK. Residues 910-923 are compositionally biased toward low complexity; the sequence is GRGPSPAAASPEGS.

Interacts with GEM through its N-terminal.

Functionally, stimulates, in vitro and in vivo, the GTPase activity of RhoA. This is GEM-interacting protein (GMIP) from Homo sapiens (Human).